Reading from the N-terminus, the 276-residue chain is Large ribosomal subunit protein uL2 (276 aa).

Disordered stretches follow at residues Arg-14–His-58 and Pro-219–Lys-276. Over residues Ala-16 to Ser-27 the composition is skewed to polar residues. The segment covering Arg-255–Lys-276 has biased composition (basic residues).

The protein belongs to the universal ribosomal protein uL2 family. Part of the 50S ribosomal subunit. Forms a bridge to the 30S subunit in the 70S ribosome.

Functionally, one of the primary rRNA binding proteins. Required for association of the 30S and 50S subunits to form the 70S ribosome, for tRNA binding and peptide bond formation. It has been suggested to have peptidyltransferase activity; this is somewhat controversial. Makes several contacts with the 16S rRNA in the 70S ribosome. In Bifidobacterium longum (strain DJO10A), this protein is Large ribosomal subunit protein uL2.